Reading from the N-terminus, the 274-residue chain is Mitochondrial outer membrane protein porin 4 (274 aa).

Gly-2 bears the N-acetylglycine mark. Position 76 is a phosphoserine (Ser-76).

Belongs to the eukaryotic mitochondrial porin (TC 1.B.8.1) family. In terms of tissue distribution, widely expressed.

The protein resides in the cell membrane. Its subcellular location is the mitochondrion outer membrane. Its function is as follows. Forms a channel through the mitochondrial outer membrane that allows diffusion of small hydrophilic molecules. The channel adopts an open conformation at low or zero membrane potential and a closed conformation at potentials above 30-40 mV. The open state has a weak anion selectivity whereas the closed state is cation-selective. Involved in plant growth and development at the vegetative and reproductive stages. Is important for leaf and pollen development and mitochondrial membrane potential steady state. May be involved in disease resistance. In Arabidopsis thaliana (Mouse-ear cress), this protein is Mitochondrial outer membrane protein porin 4 (VDAC4).